The primary structure comprises 232 residues: Dehydrin DHN3 (232 aa).

A compositionally biased stretch (polar residues) spans 1 to 14 (MSQYQNQYGAQTGM). Disordered regions lie at residues 1 to 66 (MSQY…QHRG) and 140 to 232 (EHHG…CTGH). Residues 49–60 (TTGGATGQGHGH) show a composition bias toward gly residues. Positions 140 to 157 (EHHGDKKGVMDKIKEKIP) are enriched in basic and acidic residues. A compositionally biased stretch (polar residues) spans 159-168 (TEQSRTNTDG). A compositionally biased stretch (basic and acidic residues) spans 198–223 (EQQDVHHGDEQHGEKKGIMEKIKEKL).

This sequence belongs to the plant dehydrin family.

The protein is Dehydrin DHN3 (DHN3) of Pisum sativum (Garden pea).